A 128-amino-acid polypeptide reads, in one-letter code: MGDYVVVLEAPIIVKDVETSEDAINVAVSKVAKALNKENLDFVRVEIGYSQCPVCGAHFESAFVIGSVGLVGIYLTLKVFNAQSIEHAERIAKAVVGKALKRVPLKVFEIRELEEENGDGLEVPDEFE.

Belongs to the UPF0212 family.

The chain is UPF0212 protein TGAM_1344 from Thermococcus gammatolerans (strain DSM 15229 / JCM 11827 / EJ3).